A 498-amino-acid polypeptide reads, in one-letter code: ATP synthase subunit beta, chloroplastic (498 aa).

An ATP-binding site is contributed by 172-179; that stretch reads GGAGVGKT.

This sequence belongs to the ATPase alpha/beta chains family. In terms of assembly, F-type ATPases have 2 components, CF(1) - the catalytic core - and CF(0) - the membrane proton channel. CF(1) has five subunits: alpha(3), beta(3), gamma(1), delta(1), epsilon(1). CF(0) has four main subunits: a(1), b(1), b'(1) and c(9-12).

The protein localises to the plastid. The protein resides in the chloroplast thylakoid membrane. It catalyses the reaction ATP + H2O + 4 H(+)(in) = ADP + phosphate + 5 H(+)(out). Produces ATP from ADP in the presence of a proton gradient across the membrane. The catalytic sites are hosted primarily by the beta subunits. The sequence is that of ATP synthase subunit beta, chloroplastic from Nymphaea odorata (White water lily).